A 297-amino-acid chain; its full sequence is Phosphatidylserine decarboxylase proenzyme (297 aa).

Residues aspartate 100, histidine 157, and serine 263 each act as charge relay system; for autoendoproteolytic cleavage activity in the active site. The Schiff-base intermediate with substrate; via pyruvic acid; for decarboxylase activity role is filled by serine 263. Serine 263 is modified (pyruvic acid (Ser); by autocatalysis).

This sequence belongs to the phosphatidylserine decarboxylase family. PSD-B subfamily. Prokaryotic type I sub-subfamily. Heterodimer of a large membrane-associated beta subunit and a small pyruvoyl-containing alpha subunit. Requires pyruvate as cofactor. In terms of processing, is synthesized initially as an inactive proenzyme. Formation of the active enzyme involves a self-maturation process in which the active site pyruvoyl group is generated from an internal serine residue via an autocatalytic post-translational modification. Two non-identical subunits are generated from the proenzyme in this reaction, and the pyruvate is formed at the N-terminus of the alpha chain, which is derived from the carboxyl end of the proenzyme. The autoendoproteolytic cleavage occurs by a canonical serine protease mechanism, in which the side chain hydroxyl group of the serine supplies its oxygen atom to form the C-terminus of the beta chain, while the remainder of the serine residue undergoes an oxidative deamination to produce ammonia and the pyruvoyl prosthetic group on the alpha chain. During this reaction, the Ser that is part of the protease active site of the proenzyme becomes the pyruvoyl prosthetic group, which constitutes an essential element of the active site of the mature decarboxylase.

It localises to the cell membrane. It carries out the reaction a 1,2-diacyl-sn-glycero-3-phospho-L-serine + H(+) = a 1,2-diacyl-sn-glycero-3-phosphoethanolamine + CO2. It participates in phospholipid metabolism; phosphatidylethanolamine biosynthesis; phosphatidylethanolamine from CDP-diacylglycerol: step 2/2. Functionally, catalyzes the formation of phosphatidylethanolamine (PtdEtn) from phosphatidylserine (PtdSer). The protein is Phosphatidylserine decarboxylase proenzyme of Actinobacillus pleuropneumoniae serotype 5b (strain L20).